The sequence spans 617 residues: Vacuolar protein sorting-associated protein 33B (617 aa).

This sequence belongs to the STXBP/unc-18/SEC1 family. Interacts with vipas39. Widely expressed from 4 hours post-fertilization (hpf) to 24 hpf. At 48 hpf, localized to brain, retina, ear, liver and proximal intestine. This expression pattern is more pronounced at 72 hpf and persists through 5 days post-fertilization (dpf). At 3 dpf and 4 dpf, expression in the liver is predominantly in developing biliary epithelial cells. No expression detected in kidney or spinal cord.

Its subcellular location is the late endosome membrane. The protein resides in the lysosome membrane. In terms of biological role, may play a role in vesicle-mediated protein trafficking to lysosomal compartments and in membrane docking/fusion reactions of late endosomes/lysosomes. Required for proper trafficking and targeting of the collagen-modifying enzyme lysyl hydroxylase 3 (LH3) to intracellular collagen. Mediates phagolysosomal fusion in macrophages. Proposed to be involved in endosomal maturation implicating vipas39. In epithelial cells, the vps33b:vipas39 complex may play a role in the apical recycling pathway and in the maintenance of the apical-basolateral polarity. Plays a role in bile duct development. In Danio rerio (Zebrafish), this protein is Vacuolar protein sorting-associated protein 33B.